The sequence spans 343 residues: Anthranilate phosphoribosyltransferase (343 aa).

5-phospho-alpha-D-ribose 1-diphosphate-binding positions include Gly84, 87 to 88 (GD), Thr92, 94 to 97 (NIST), 112 to 120 (KHGNRGVSS), and Ser124. Residue Gly84 coordinates anthranilate. Ser96 contacts Mg(2+). Residue Asn115 coordinates anthranilate. Arg170 is a binding site for anthranilate. 2 residues coordinate Mg(2+): Asp229 and Glu230.

The protein belongs to the anthranilate phosphoribosyltransferase family. As to quaternary structure, homodimer. It depends on Mg(2+) as a cofactor.

It carries out the reaction N-(5-phospho-beta-D-ribosyl)anthranilate + diphosphate = 5-phospho-alpha-D-ribose 1-diphosphate + anthranilate. It participates in amino-acid biosynthesis; L-tryptophan biosynthesis; L-tryptophan from chorismate: step 2/5. Functionally, catalyzes the transfer of the phosphoribosyl group of 5-phosphorylribose-1-pyrophosphate (PRPP) to anthranilate to yield N-(5'-phosphoribosyl)-anthranilate (PRA). The sequence is that of Anthranilate phosphoribosyltransferase from Burkholderia ambifaria (strain MC40-6).